Reading from the N-terminus, the 249-residue chain is DNA polymerase sliding clamp (249 aa).

This sequence belongs to the PCNA family. As to quaternary structure, homotrimer. The subunits circularize to form a toroid; DNA passes through its center. Replication factor C (RFC) is required to load the toroid on the DNA.

Its function is as follows. Sliding clamp subunit that acts as a moving platform for DNA processing. Responsible for tethering the catalytic subunit of DNA polymerase and other proteins to DNA during high-speed replication. The protein is DNA polymerase sliding clamp of Thermococcus fumicolans.